We begin with the raw amino-acid sequence, 850 residues long: MLLVRTTSLNVSRMPVPCLARGIGILKGKYRLANLMNAQPSVRHVSSEIQQKDQQAGESNTATDTGVIHKSDEETLIYFDNVYARTTSVWNPTLWYNLLLRNQSRDAVREKIRNLASPPNNPIYGLELKSTIPVKRDGGVFATFVVPPKYTKAQVNSLIQQNTARESSKNLLSYFTRASAFPVKGSPWIEDLRRLPSTTIVIKFQGPALTEEEIYSLFRRYGTIIDIFPPTAANNNVAKVRYRSFRGAISAKNCVSGIEIHNTVLHIQYENIRRGHLVSNFFTNHTRIAIPVLFALLSIFAVLVFDPIREFSIEQKITHKYSLSWDNKFWKQLKTLTSSTMTSIKYYWGGPDDNHQRKHLWEERIEKVNDLKMWLEENNNTFVVIRGPRGSGKHDLVMQHTLQNRANVLYLDCDKLIKSRTDPMFLKNAASQLGYFPIFPWIDSVTGVLDLTVQGLTGQKTGLSETKESRFRNMLTTSLMSIRRIALKNYKAFVSTGDGTVNVKEEDYLQQHPEAKPVIVIDRFEGKSEINGFVYKELSDWAAMLVQMNIAHVIFLTETVASNQRLSESLPNQVFKNLILSDASKENSRNYVLSQLEDYLYYNKKSKGENVKEPESEKETAENNDSDSEADTSVKKAEVILNEKELQEIDASLEPLGGRMLDLQAFVRRVKSGEEPSEAVDKMIEQASEQITQMFLSDKIDSNKSAQAWELIELLSANPVIPFHEIVNKPLFKAAPETGIMELENNGLITVSRDRGVLQEIRPAKPLYRAAFTYLINDPELAKVLKTRYLLKVVGFETGRIKKWEEELKPLGKVPDQKLFKTRLDYLSGKINASNAVITKCEEEIKNLSK.

The transit peptide at 1–44 (MLLVRTTSLNVSRMPVPCLARGIGILKGKYRLANLMNAQPSVRH) directs the protein to the mitochondrion. The tract at residues 44 to 66 (HVSSEIQQKDQQAGESNTATDTG) is disordered. Over 45–287 (VSSEIQQKDQ…VSNFFTNHTR (243 aa)) the chain is Mitochondrial matrix. Over residues 47–64 (SEIQQKDQQAGESNTATD) the composition is skewed to polar residues. The RRM domain occupies 198-272 (TTIVIKFQGP…TVLHIQYENI (75 aa)). Residues 288–308 (IAIPVLFALLSIFAVLVFDPI) form a helical membrane-spanning segment. Over 309–850 (REFSIEQKIT…CEEEIKNLSK (542 aa)) the chain is Mitochondrial intermembrane. Residues 607-621 (KGENVKEPESEKETA) show a composition bias toward basic and acidic residues. The interval 607–633 (KGENVKEPESEKETAENNDSDSEADTS) is disordered.

Belongs to the YME2 family.

It is found in the mitochondrion inner membrane. Plays a role in maintaining the mitochondrial genome and in controlling the mtDNA escape. Involved in the regulation of mtDNA nucleotide structure and number. May have a dispensable role in early maturation of pre-rRNA. The chain is Mitochondrial escape protein 2 (YME2) from Saccharomyces cerevisiae (strain ATCC 204508 / S288c) (Baker's yeast).